We begin with the raw amino-acid sequence, 103 residues long: Small ribosomal subunit protein uS10 (103 aa).

The protein belongs to the universal ribosomal protein uS10 family. As to quaternary structure, part of the 30S ribosomal subunit.

Its function is as follows. Involved in the binding of tRNA to the ribosomes. The sequence is that of Small ribosomal subunit protein uS10 from Sulfurovum sp. (strain NBC37-1).